A 259-amino-acid chain; its full sequence is GTP cyclohydrolase FolE2 (259 aa).

Belongs to the GTP cyclohydrolase IV family.

The catalysed reaction is GTP + H2O = 7,8-dihydroneopterin 3'-triphosphate + formate + H(+). It functions in the pathway cofactor biosynthesis; 7,8-dihydroneopterin triphosphate biosynthesis; 7,8-dihydroneopterin triphosphate from GTP: step 1/1. Its function is as follows. Converts GTP to 7,8-dihydroneopterin triphosphate. The protein is GTP cyclohydrolase FolE2 of Halorhodospira halophila (strain DSM 244 / SL1) (Ectothiorhodospira halophila (strain DSM 244 / SL1)).